The sequence spans 246 residues: UDP-N-acetyl-D-mannosaminuronic acid transferase (246 aa).

The protein belongs to the glycosyltransferase 26 family.

It carries out the reaction UDP-N-acetyl-alpha-D-mannosaminouronate + N-acetyl-alpha-D-glucosaminyl-di-trans,octa-cis-undecaprenyl diphosphate = beta-D-ManNAcA-(1-&gt;4)-alpha-D-GlcNAc-di-trans,octa-cis-undecaprenyl diphosphate + UDP + H(+). Its pathway is bacterial outer membrane biogenesis; enterobacterial common antigen biosynthesis. Its function is as follows. Catalyzes the synthesis of Und-PP-GlcNAc-ManNAcA (Lipid II), the second lipid-linked intermediate involved in enterobacterial common antigen (ECA) synthesis. The sequence is that of UDP-N-acetyl-D-mannosaminuronic acid transferase from Escherichia fergusonii (strain ATCC 35469 / DSM 13698 / CCUG 18766 / IAM 14443 / JCM 21226 / LMG 7866 / NBRC 102419 / NCTC 12128 / CDC 0568-73).